Reading from the N-terminus, the 181-residue chain is ATP-dependent protease subunit HslV (181 aa).

The active site involves Thr-6. Na(+)-binding residues include Gly-162, Cys-165, and Thr-168.

This sequence belongs to the peptidase T1B family. HslV subfamily. In terms of assembly, a double ring-shaped homohexamer of HslV is capped on each side by a ring-shaped HslU homohexamer. The assembly of the HslU/HslV complex is dependent on binding of ATP.

Its subcellular location is the cytoplasm. The enzyme catalyses ATP-dependent cleavage of peptide bonds with broad specificity.. With respect to regulation, allosterically activated by HslU binding. In terms of biological role, protease subunit of a proteasome-like degradation complex believed to be a general protein degrading machinery. This is ATP-dependent protease subunit HslV from Nitratidesulfovibrio vulgaris (strain ATCC 29579 / DSM 644 / CCUG 34227 / NCIMB 8303 / VKM B-1760 / Hildenborough) (Desulfovibrio vulgaris).